The following is a 338-amino-acid chain: Nickel transporter NixA (338 aa).

The next 8 helical transmembrane spans lie at 11 to 31 (WLPYIAIVILLHVIGFSFLWI), 37 to 57 (HILFGMGILAYTLGLRHAFDA), 79 to 99 (GVGFYFSIGHSSVVFLMAVFL), 127 to 147 (FFLVLIGVLNLIILISLINLF), 187 to 207 (VLPLGFLFGLGFDTASEIALL), 217 to 237 (AISFIGILSLPILFASGMSLL), 266 to 286 (ITAISVMAALVIGMIELLQIL), and 307 to 327 (YLGYILVALFLITWLISSLIW).

The protein belongs to the NiCoT transporter (TC 2.A.52) family.

It is found in the cell membrane. Secondary nickel transporter. Required for full urease activity. In Staphylococcus aureus (strain NCTC 8325 / PS 47), this protein is Nickel transporter NixA.